The chain runs to 160 residues: UPF0479 membrane protein YLL066W-A (160 aa).

2 helical membrane passes run 39–59 (IVFC…KVLQ) and 136–156 (VPMI…ISQH).

Belongs to the UPF0479 family.

It localises to the membrane. The protein is UPF0479 membrane protein YLL066W-A of Saccharomyces cerevisiae (strain ATCC 204508 / S288c) (Baker's yeast).